A 527-amino-acid polypeptide reads, in one-letter code: T-complex protein 1 subunit beta (527 aa).

Ser-2 is modified (N-acetylserine).

The protein belongs to the TCP-1 chaperonin family. In terms of assembly, heterooligomeric complex of about 850 to 900 kDa that forms two stacked rings, 12 to 16 nm in diameter. Interacts with PLP2; this interaction leads to inhibition of CCT complex mediated actin folding.

Its subcellular location is the cytoplasm. Functionally, molecular chaperone; assists the folding of proteins upon ATP hydrolysis. Known to play a role, in vitro, in the folding of actin and tubulin. In yeast may play a role in mitotic spindle formation. This chain is T-complex protein 1 subunit beta (CCT2), found in Saccharomyces cerevisiae (strain ATCC 204508 / S288c) (Baker's yeast).